Consider the following 371-residue polypeptide: Queuine tRNA-ribosyltransferase (371 aa).

Residue Asp-90 is the Proton acceptor of the active site. Substrate is bound by residues 90 to 94, Asp-144, Gln-185, and Gly-212; that span reads DSGGF. Residues 243 to 249 are RNA binding; it reads GVGTPED. The active-site Nucleophile is the Asp-262. The segment at 267–271 is RNA binding; important for wobble base 34 recognition; the sequence is TRNAR. The Zn(2+) site is built by Cys-300, Cys-302, Cys-305, and His-331.

It belongs to the queuine tRNA-ribosyltransferase family. In terms of assembly, homodimer. Within each dimer, one monomer is responsible for RNA recognition and catalysis, while the other monomer binds to the replacement base PreQ1. Zn(2+) serves as cofactor.

It catalyses the reaction 7-aminomethyl-7-carbaguanine + guanosine(34) in tRNA = 7-aminomethyl-7-carbaguanosine(34) in tRNA + guanine. The protein operates within tRNA modification; tRNA-queuosine biosynthesis. Functionally, catalyzes the base-exchange of a guanine (G) residue with the queuine precursor 7-aminomethyl-7-deazaguanine (PreQ1) at position 34 (anticodon wobble position) in tRNAs with GU(N) anticodons (tRNA-Asp, -Asn, -His and -Tyr). Catalysis occurs through a double-displacement mechanism. The nucleophile active site attacks the C1' of nucleotide 34 to detach the guanine base from the RNA, forming a covalent enzyme-RNA intermediate. The proton acceptor active site deprotonates the incoming PreQ1, allowing a nucleophilic attack on the C1' of the ribose to form the product. After dissociation, two additional enzymatic reactions on the tRNA convert PreQ1 to queuine (Q), resulting in the hypermodified nucleoside queuosine (7-(((4,5-cis-dihydroxy-2-cyclopenten-1-yl)amino)methyl)-7-deazaguanosine). The polypeptide is Queuine tRNA-ribosyltransferase (Acidithiobacillus ferrooxidans (strain ATCC 23270 / DSM 14882 / CIP 104768 / NCIMB 8455) (Ferrobacillus ferrooxidans (strain ATCC 23270))).